The chain runs to 585 residues: Bifunctional lycopene cyclase/phytoene synthase (585 aa).

The tract at residues 1-243 (MGFDYAIVHV…IVFGQLAFDN (243 aa)) is lycopene beta-cyclase. The next 7 membrane-spanning stretches (helical) occupy residues 3–23 (FDYA…LTLL), 35–55 (KVLF…SYLI), 75–97 (IPLE…YLIL), 123–141 (LAGQ…LRVH), 151–171 (LIVV…YQFI), 173–193 (GLPW…LWLV), and 221–241 (IEEA…QLAF). The interval 250 to 585 (TFPALFPKPP…AWRTLNKSIA (336 aa)) is phytoene synthase.

It in the N-terminal section; belongs to the lycopene beta-cyclase family. The protein in the C-terminal section; belongs to the phytoene/squalene synthase family.

It localises to the membrane. The enzyme catalyses all-trans-lycopene = gamma-carotene. The catalysed reaction is gamma-carotene = all-trans-beta-carotene. It carries out the reaction 2 (2E,6E,10E)-geranylgeranyl diphosphate = 15-cis-phytoene + 2 diphosphate. It functions in the pathway carotenoid biosynthesis; beta-carotene biosynthesis. Its pathway is carotenoid biosynthesis; phytoene biosynthesis; all-trans-phytoene from geranylgeranyl diphosphate: step 1/1. In terms of biological role, bifunctional enzyme that catalyzes the reactions from geranylgeranyl diphosphate to phytoene (phytoene synthase) and lycopene to beta-carotene via the intermediate gamma-carotene (lycopene cyclase). The sequence is that of Bifunctional lycopene cyclase/phytoene synthase from Phaeosphaeria nodorum (strain SN15 / ATCC MYA-4574 / FGSC 10173) (Glume blotch fungus).